The chain runs to 443 residues: Multidrug resistance protein MdtA (443 aa).

The N-terminal stretch at 1–24 (MKAQSKRTSRLLILLGIAVAIIVA) is a signal peptide. Over residues 36 to 46 (DGSTGAQQHAV) the composition is skewed to polar residues. Disordered regions lie at residues 36–57 (DGSTGAQQHAVGNNPARAGGRR) and 398–443 (TPRS…AEKS). Basic and acidic residues predominate over residues 409–419 (AAEKPATAEKA). The segment covering 427–443 (SATGASAGSTTTAAEKS) has biased composition (low complexity).

It belongs to the membrane fusion protein (MFP) (TC 8.A.1) family. In terms of assembly, part of a tripartite efflux system composed of MdtA, MdtB and MdtC.

The protein localises to the cell inner membrane. This Yersinia enterocolitica serotype O:8 / biotype 1B (strain NCTC 13174 / 8081) protein is Multidrug resistance protein MdtA.